The primary structure comprises 239 residues: Octanoyltransferase (239 aa).

A BPL/LPL catalytic domain is found at 59–239 (PFSPQAVWLL…KRRFKLNWEK (181 aa)). Substrate-binding positions include 101 to 108 (RGGEVTHH), 168 to 170 (SIG), and 181 to 183 (GFS). Residue C199 is the Acyl-thioester intermediate of the active site.

Belongs to the LipB family.

The protein localises to the cytoplasm. The catalysed reaction is octanoyl-[ACP] + L-lysyl-[protein] = N(6)-octanoyl-L-lysyl-[protein] + holo-[ACP] + H(+). The protein operates within protein modification; protein lipoylation via endogenous pathway; protein N(6)-(lipoyl)lysine from octanoyl-[acyl-carrier-protein]: step 1/2. Catalyzes the transfer of endogenously produced octanoic acid from octanoyl-acyl-carrier-protein onto the lipoyl domains of lipoate-dependent enzymes. Lipoyl-ACP can also act as a substrate although octanoyl-ACP is likely to be the physiological substrate. This Prochlorococcus marinus (strain NATL2A) protein is Octanoyltransferase.